Here is a 1230-residue protein sequence, read N- to C-terminus: Potassium channel subfamily T member 1 (1230 aa).

The segment at 1-37 is disordered; it reads MARAKLPRSPSEGKAGPGGAPAGAAAPEEPHGLSPLL. At 1-93 the chain is on the cytoplasmic side; the sequence is MARAKLPRSP…LFFIKNQRSS (93 aa). Residues 94-126 form a helical membrane-spanning segment; it reads LRIRLFNFSLKLLTCLLYIVRVLLDDPALGIGC. Residues 127 to 153 are Extracellular-facing; it reads WGCPKQNYSFNDSSSEINWAPILWVER. N-linked (GlcNAc...) asparagine glycans are attached at residues asparagine 133 and asparagine 137. Residues 154 to 178 form a helical membrane-spanning segment; that stretch reads KMTLWAIQVIVAIISFLETMLLIYL. Topologically, residues 179 to 192 are cytoplasmic; that stretch reads SYKGNIWEQIFRVS. Residues 193–208 form a helical membrane-spanning segment; the sequence is FVLEMINTLPFIITIF. The Extracellular portion of the chain corresponds to 209–215; it reads WPPLRNL. The chain crosses the membrane as a helical span at residues 216 to 233; sequence FIPVFLNCWLAKHALENM. At 234–246 the chain is on the cytoplasmic side; that stretch reads INDFHRAILRTQS. Residues 247 to 274 traverse the membrane as a helical segment; that stretch reads AMFNQVLILFCTLLCLVFTGTCGIQHLE. Residues 275–281 are Extracellular-facing; sequence RAGENLS. Residues 282-302 constitute an intramembrane region (pore-forming); that stretch reads LLTSFYFCIVTFSTVGYGDVT. The K(+) site is built by valine 296 and glycine 297. Over 303 to 304 the chain is Extracellular; that stretch reads PK. The chain crosses the membrane as a helical span at residues 305–338; the sequence is IWPSQLLVVIMICVALVVLPLQFEELVYLWMERQ. Over 339–1230 the chain is Cytoplasmic; it reads KSGGNYSRHR…NPETRDETQL (892 aa). Residues 352–488 form the RCK N-terminal 1 domain; the sequence is EKHVVLCVSS…FHVKFADHVV (137 aa). Positions 513, 516, 538, and 540 each coordinate Na(+). Residues 660-689 form a disordered region; it reads TEHRPTQSGGGGGGSKLALPTENGSGSRRP. Residues cysteine 758 and cysteine 759 each contribute to the Zn(2+) site. Arginine 761 and lysine 764 together coordinate K(+). Residues arginine 761 and lysine 764 each coordinate Na(+). 2 residues coordinate Zn(2+): cysteine 766 and histidine 768. 4 residues coordinate K(+): asparagine 769, tyrosine 771, tyrosine 777, and glycine 778. Tyrosine 771 is a binding site for Na(+). Phenylalanine 779 is a Na(+) binding site. In terms of domain architecture, RCK N-terminal 2 spans 781–921; the sequence is NKLIIVSAET…QFRAKDSYSL (141 aa). K(+)-binding residues include serine 787, leucine 818, aspartate 820, glycine 842, and aspartate 865. Disordered stretches follow at residues 1048-1078 and 1204-1230; these read EVKG…EHPL and SSSQ…ETQL. Positions 1057–1072 are enriched in gly residues; the sequence is AGTGGSSQGRHTGGGD. The segment covering 1204-1219 has biased composition (low complexity); that stretch reads SSSQSRKSSCSHKLSS.

The protein belongs to the potassium channel family. Calcium-activated (TC 1.A.1.3) subfamily. KCa4.1/KCNT1 sub-subfamily. As to quaternary structure, homotetramer; which constitutes the Na(+)-activated K(+) channel. Interacts with KCNT2; these heterodimer channels differ from the homomers in their unitary conductance, kinetic behavior, subcellular localization, and response to activation of protein kinase C. Interacts (via C-terminus) with FMR1; this interaction alters gating properties of KCNT1. Interacts with CRBN via its cytoplasmic C-terminus. Post-translationally, phosphorylated by protein kinase C. Phosphorylation of the C-terminal domain increases channel activity. As to expression, highest expression in liver, brain and spinal cord. Lowest expression in skeletal muscle.

It localises to the cell membrane. It catalyses the reaction K(+)(in) = K(+)(out). With respect to regulation, activated by high intracellular Na(+). In addition to activation by Na(+), is cooperatively activated by intracellular Cl(-) levels. Inhibited by Zn(2+). Activated upon stimulation of G-protein coupled receptors, such as CHRM1 and GRIA1. Functionally, sodium-activated K(+) channel. Acts as an important mediator of neuronal membrane excitability. Contributes to the delayed outward currents. Regulates neuronal bursting in sensory neurons. Contributes to synaptic development and plasticity. This chain is Potassium channel subfamily T member 1, found in Homo sapiens (Human).